The primary structure comprises 199 residues: NAD(P)H dehydrogenase (quinone) (199 aa).

The Flavodoxin-like domain occupies 4 to 190; the sequence is VLVLYYSTYG…EGARHQGELI (187 aa). FMN is bound by residues 10–15 and 78–80; these read STYGHV and TRF. Tyrosine 12 serves as a coordination point for NAD(+). Tryptophan 98 is a substrate binding site. Residues 113 to 119 and histidine 134 each bind FMN; that span reads STATQHG.

This sequence belongs to the WrbA family. The cofactor is FMN.

It catalyses the reaction a quinone + NADH + H(+) = a quinol + NAD(+). It carries out the reaction a quinone + NADPH + H(+) = a quinol + NADP(+). This chain is NAD(P)H dehydrogenase (quinone), found in Cupriavidus metallidurans (strain ATCC 43123 / DSM 2839 / NBRC 102507 / CH34) (Ralstonia metallidurans).